The sequence spans 540 residues: Anti-sigma-I factor RsgI7 (540 aa).

One can recognise a RsgI N-terminal anti-sigma domain in the interval 1–48; it reads MRAMVVDMNDKYAVVVNKEGQYIKIKRKAEHRLGYQVELPDRVIGFER. At 1–50 the chain is on the cytoplasmic side; the sequence is MRAMVVDMNDKYAVVVNKEGQYIKIKRKAEHRLGYQVELPDRVIGFERRT. The chain crosses the membrane as a helical span at residues 51-73; it reads LLKVVSVAAALLIVSSISFAVYS. Residues 74 to 540 lie on the Extracellular side of the membrane; it reads YNLPYSYVNV…PGKEILKKRC (467 aa). Composition is skewed to basic and acidic residues over residues 238–256, 319–329, 338–351, 359–370, and 398–419; these read DIKK…KKVN, SGIDKGNKDSK, NDVK…KTNS, VSKDNKNDKADG, and SKDD…EDNK. Disordered stretches follow at residues 238–429 and 481–540; these read DIKK…CPQY and QEEQ…KKRC. Positions 451–501 form a coiled coil; sequence KEDMTKQNDEWFKKMQEEQKKQYDEWLKKMQEEQKKQHDEWVKKMEEMKNT.

In terms of assembly, interacts (via RsgI N-terminal anti-sigma domain) with SigI7.

The protein resides in the cell membrane. Its function is as follows. Anti-sigma factor for SigI7. Negatively regulates SigI7 activity through direct interaction. In Acetivibrio thermocellus (strain ATCC 27405 / DSM 1237 / JCM 9322 / NBRC 103400 / NCIMB 10682 / NRRL B-4536 / VPI 7372) (Clostridium thermocellum), this protein is Anti-sigma-I factor RsgI7.